The following is a 146-amino-acid chain: uncharacterized protein (146 aa).

Residues 7–27 (FVLSITIVLVILIIIAFIWYN) traverse the membrane as a helical segment.

It belongs to the asfivirus E146L family.

It localises to the host membrane. The protein localises to the virion. This is an uncharacterized protein from Ornithodoros (relapsing fever ticks).